A 333-amino-acid polypeptide reads, in one-letter code: Ketol-acid reductoisomerase (NADP(+)) (333 aa).

Residues 2–182 (AKIFYDSDCN…GASRAGIILT (181 aa)) form the KARI N-terminal Rossmann domain. NADP(+) contacts are provided by residues 25–28 (FGSQ), Ser51, Ser53, and 83–86 (DEKQ). Residue His108 is part of the active site. Gly134 serves as a coordination point for NADP(+). Positions 183–328 (TFKEETETDL…KELRKMMPWI (146 aa)) constitute a KARI C-terminal knotted domain. Mg(2+) contacts are provided by Asp191, Glu195, Glu227, and Glu231. Ser252 is a binding site for substrate.

This sequence belongs to the ketol-acid reductoisomerase family. It depends on Mg(2+) as a cofactor.

It catalyses the reaction (2R)-2,3-dihydroxy-3-methylbutanoate + NADP(+) = (2S)-2-acetolactate + NADPH + H(+). It carries out the reaction (2R,3R)-2,3-dihydroxy-3-methylpentanoate + NADP(+) = (S)-2-ethyl-2-hydroxy-3-oxobutanoate + NADPH + H(+). It functions in the pathway amino-acid biosynthesis; L-isoleucine biosynthesis; L-isoleucine from 2-oxobutanoate: step 2/4. Its pathway is amino-acid biosynthesis; L-valine biosynthesis; L-valine from pyruvate: step 2/4. Involved in the biosynthesis of branched-chain amino acids (BCAA). Catalyzes an alkyl-migration followed by a ketol-acid reduction of (S)-2-acetolactate (S2AL) to yield (R)-2,3-dihydroxy-isovalerate. In the isomerase reaction, S2AL is rearranged via a Mg-dependent methyl migration to produce 3-hydroxy-3-methyl-2-ketobutyrate (HMKB). In the reductase reaction, this 2-ketoacid undergoes a metal-dependent reduction by NADPH to yield (R)-2,3-dihydroxy-isovalerate. In Caldicellulosiruptor bescii (strain ATCC BAA-1888 / DSM 6725 / KCTC 15123 / Z-1320) (Anaerocellum thermophilum), this protein is Ketol-acid reductoisomerase (NADP(+)).